Here is a 117-residue protein sequence, read N- to C-terminus: Ribosome-binding factor A (117 aa).

Belongs to the RbfA family. As to quaternary structure, monomer. Binds 30S ribosomal subunits, but not 50S ribosomal subunits or 70S ribosomes.

Its subcellular location is the cytoplasm. Functionally, one of several proteins that assist in the late maturation steps of the functional core of the 30S ribosomal subunit. Associates with free 30S ribosomal subunits (but not with 30S subunits that are part of 70S ribosomes or polysomes). Required for efficient processing of 16S rRNA. May interact with the 5'-terminal helix region of 16S rRNA. This chain is Ribosome-binding factor A, found in Leptospira interrogans serogroup Icterohaemorrhagiae serovar Lai (strain 56601).